The sequence spans 49 residues: Light-harvesting protein B-880 alpha chain (49 aa).

The Cytoplasmic portion of the chain corresponds to 1–12 (MYKLWLLFDPRR). A helical membrane pass occupies residues 13-33 (TLVALSAFLFVLGLIIHFISL). His-29 lines the a bacteriochlorophyll pocket. At 34–49 (STDRFNWLEGKPAVRA) the chain is on the periplasmic side.

The protein belongs to the antenna complex alpha subunit family. The core complex is formed by different alpha and beta chains, binding bacteriochlorophyll molecules, and arranged most probably in tetrameric structures disposed around the reaction center. The non-pigmented gamma chains may constitute additional components.

It is found in the cell inner membrane. Its function is as follows. Antenna complexes are light-harvesting systems, which transfer the excitation energy to the reaction centers. The polypeptide is Light-harvesting protein B-880 alpha chain (Rhodoblastus acidophilus (Rhodopseudomonas acidophila)).